Reading from the N-terminus, the 1736-residue chain is Collagen alpha-2(XI) chain (1736 aa).

Positions 1–27 (MERCSRCHHLLLLVLLLLWLSAAPAWA) are cleaved as a signal peptide. In terms of domain architecture, Laminin G-like spans 57 to 228 (DVAYRVSRPA…ESCDQKELEC (172 aa)). Residues 215–486 (QAAYESCDQK…ILQQARVALR (272 aa)) form a nonhelical region region. Disordered regions lie at residues 229–465 (EGGW…DKGP) and 485–1539 (LRGP…SPGG). Polar residues predominate over residues 258 to 270 (PQNQEPQAQSTES). Over residues 363–376 (ALSAETARSEAAAR) the composition is skewed to low complexity. Collagen-like domains follow at residues 399–447 (GPPG…GPPG), 487–545 (GPPG…ADGA), and 546–587 (RGMP…PPGE). The span at 400–413 (PPGPEGPAGFPGPP) shows a compositional bias: pro residues. The interval 487–1500 (GPPGPMGYTG…PGHPGPPGEV (1014 aa)) is triple-helical region. Residues 515–533 (DLGPQGPRGPQGLMGPPGK) are compositionally biased toward low complexity. Over residues 615 to 624 (KGPPGIPGPP) the composition is skewed to pro residues. Residues 650–663 (QQGTPGTQGLPGPQ) are compositionally biased toward low complexity. A compositionally biased stretch (basic and acidic residues) spans 765–774 (RGEDGPEGPK). The segment covering 842-861 (PTGPRGQRGPRGATGKSGAK) has biased composition (low complexity). Over residues 994 to 1003 (GTAGGPGLKG) the composition is skewed to gly residues. Positions 1029–1040 (IGPPGRPGPQGP) are enriched in pro residues. 2 consecutive Collagen-like domains span residues 1072–1127 (GPAG…ADGE) and 1128–1172 (PGAR…ETGD). The span at 1115–1133 (PVGQPGAAGADGEPGARGP) shows a compositional bias: low complexity. Residues 1176-1187 (MGPPGPPGPRGP) show a composition bias toward pro residues. Positions 1217–1230 (ESGSPGVQGEPGVK) are enriched in low complexity. 2 stretches are compositionally biased toward basic and acidic residues: residues 1232–1241 (PRGERGEKGE) and 1287–1296 (DGAKGDRGED). Low complexity-rich tracts occupy residues 1341-1364 (PGAV…KPGP) and 1376-1386 (QQGRPGATGQA). Positions 1388–1397 (PPGPVGPPGL) are enriched in pro residues. The span at 1413-1422 (PGLIGLIGPP) shows a compositional bias: low complexity. Residues 1444–1499 (GETGIPGASGPIGPGGPPGLPGPAGPKGAKGATGPAGPKGEKGVQGPPGHPGPPGE) form the Collagen-like 6 domain. Positions 1457–1467 (PGGPPGLPGPA) are enriched in pro residues. The segment covering 1469-1481 (PKGAKGATGPAGP) has biased composition (low complexity). A propeptide spans 1501-1736 (IQPLPIQMPK…VLLGPVCFMG (236 aa)) (C-terminal propeptide). The Fibrillar collagen NC1 domain maps to 1541 to 1735 (EEIFGSLDSL…GVLLGPVCFM (195 aa)). The cysteines at positions 1571 and 1603 are disulfide-linked. Ca(2+)-binding residues include Asp1589, Asn1591, Gln1592, Cys1594, and Asp1597. N-linked (GlcNAc...) asparagine glycans are attached at residues Asn1604 and Asn1650. Intrachain disulfides connect Cys1612/Cys1733 and Cys1655/Cys1689.

This sequence belongs to the fibrillar collagen family. In terms of assembly, trimers composed of three different chains: alpha 1(XI), alpha 2(XI), and alpha 3(XI). Alpha 3(XI) is a post-translational modification of alpha 1(II). Alpha 1(V) can also be found instead of alpha 3(XI)=1(II). Post-translationally, prolines at the third position of the tripeptide repeating unit (G-X-Y) are hydroxylated in some or all of the chains.

Its subcellular location is the secreted. The protein localises to the extracellular space. It localises to the extracellular matrix. In terms of biological role, may play an important role in fibrillogenesis by controlling lateral growth of collagen II fibrils. The polypeptide is Collagen alpha-2(XI) chain (COL11A2) (Bos taurus (Bovine)).